A 446-amino-acid polypeptide reads, in one-letter code: Probable E3 ubiquitin-protein ligase XBOS31 (446 aa).

5 ANK repeats span residues 46–75 (DRFT…DVDV), 79–108 (KKQT…NVLT), 113–142 (RART…QAQG), 160–189 (RGAT…IVSA), and 197–227 (PGST…RLQR). The RING-type zinc finger occupies 317-366 (CNICFEQACSMEVKECGHQMCAACTLAICCHSKPNPKTLLLHPPACPFCR). The tract at residues 376–401 (TTNSNKTNSRRRSRSRSSSFKGGLSS) is disordered.

It catalyses the reaction S-ubiquitinyl-[E2 ubiquitin-conjugating enzyme]-L-cysteine + [acceptor protein]-L-lysine = [E2 ubiquitin-conjugating enzyme]-L-cysteine + N(6)-ubiquitinyl-[acceptor protein]-L-lysine.. It functions in the pathway protein modification; protein ubiquitination. The protein is Probable E3 ubiquitin-protein ligase XBOS31 (XBOS31) of Oryza sativa subsp. japonica (Rice).